A 557-amino-acid polypeptide reads, in one-letter code: MEYLLQRITGEIAGSLRRAAVKAGYLDAEDELAFELEKPKEKAHGDLATNLAMLLTKKARKNPREIAATLLEYLEIPAVVERVEIAGPGFINFYFKKDWVVAVIPEILSFGEKYGRLAIGAGKRVQVEFVSANPTGLLHMGNGRGAALGDILANILTEAGYEVSREYYINDAGNQIENFNKSVEARYLELLGYKVEFPEEGYHGEDIIDTARNIVARFGDRFIHLPEKERQEALGKIALEEKLQSIKKSLENFGVKYDVWFSERSLHESGEVEKTVKLLLERGYLYEKDGALWFAASKLGEEKDEVLVRKNGVPTYYAADIAYHKNKFDRGFDLVINIWGADHHGHVSRMKTALKALGYDPERLIVILMQLVRLFQGGELVRMSKRTGQYITLDELVEEVGVDAARYFFVMRSHDAHLDFDLDLAKEKSNENPVYYIQYAHARIMSLYRQCNEQGVTLPPVEDVDLAILSSEAELNLLRHLAEFPVEIEKCATALAPHHLARYLHELAGYFHTFYNSCRVLGVEENLSKARLLLVEATRIVLRKGLKMLGVSAPEKM.

Positions 132 to 142 (ANPTGLLHMGN) match the 'HIGH' region motif.

Belongs to the class-I aminoacyl-tRNA synthetase family. In terms of assembly, monomer.

Its subcellular location is the cytoplasm. It catalyses the reaction tRNA(Arg) + L-arginine + ATP = L-arginyl-tRNA(Arg) + AMP + diphosphate. This Carboxydothermus hydrogenoformans (strain ATCC BAA-161 / DSM 6008 / Z-2901) protein is Arginine--tRNA ligase.